Here is a 1822-residue protein sequence, read N- to C-terminus: MTSLKRSQTERPVTADRASVVSTDGTPKVHTDDFYMRRFRSQNGSLGSSVMAAVGPPRSEGPHHITSTPGVPKMGVRARIADWPPRKENVKESSRSSQEIETSSCLESLSSKGSPVSQGSSVSLNSNDSAMLKSIQNTLKNKTGPAESMDSRFLMPEAYPSSPRKALRRIRQRSNSDITISELDVDSFDECISPTYKSGPSLHREYGSTSSIDKQGTSGESFFGLLKGYKDDRADRGPTPTKLSDFLITGGGKGSGFSLDVIDGPISQRENLRLFKEREKPLKRRSKSETGDSSIFRKLRNAKGEELGKSSDLEDNRSEDSVRPWTCPKCFAHYDVQSILFDLNEAIMNRHNVIKRRNTTTGASAAAVASLVSGPLSHSTSFSSPMGSTEDFNSKGSLGMDQGDDKSNELVMSCPYFRNEIGGEGERKISLSKSNSGSFSGCESTSFESALSSHCTNAGVAVLEVPKESLMLHLDRVRRYTVEHVDLGAYYYRKCFYQKEHWNYFGADENLGPVAVSIRREKPEDMKENGSPYNYRIIFRTSELMTLRGSVLEDAIPSTAKHSTARGLPLKEVLEHVIPELNVQCLRLAFNTPKVTEQLMKLDEQGLNYQQKVGIMYCKAGQSTEEEMYNTPKVTEQFMKLDEQGLNYQQKVGIMYCKAGQSTEEEMYNNESAGPAFEEFLQLLGERVRLKGFEKYRAQLDTKTDSTGTHSLYTTYKDYEIMFHVSTMLPYTPNNKQQLLRKRHIGNDIVTIVFQEPGAQPFSPKNIRSHFQHVFVIVRAHNPCTESVCYSVAVTRSRDVPSFGPPIPKGVTFPKSNVFRDFLLAKVINAENAAHKSEKFRAMATRTRQEYLKDLAEKNVTNTPIDPSGKFPFISLASKKKEKSKPYPGAELSSMGAIVWAVRAKDYNKAMEFDCLLGISNEFIVLIEQETKSVVFNCSCRDVIGWTSSDSSLKIFYERGECISVESFMSSEDIKEIVKRLQFVSKGCESVEMTLRRNGLGQLGFHVNYEGIVADVEPYGYAWQAGLKQGSRLVEICKVAVATLSHEQMIDLLRTSVTVKVVIIPPHDDCTPRRSCSETYRMPVMEYKMNEGVSYEYKFPFRSNNKWQRNAGKGAHSPQVPLQLQSPMISRVNAGKGDGKMPLPERAANIPRSISSDGRPLERRLSPGSDIYVTVSSMALARSQCRNSPSNLSSSSETGSGGGTYRQKSMPEGFGVSRRSPASIDRQNTQSDIGGSGKSTPSWQRSEDSLADQMEPTCHLPAVSKVLPAFRESPSGRLMRQDPVVHLSPNKQGHSDSHYSSHSSSNTLSSNASSAHSDEKWYDGDRTESDLNSYNYLQGTSADSGIDTASYGLSHGSTASLGASTSSPRSGPGKEKVAPLWHSSSEVLSLADRTLETEGHGMDRKTESSLSLDIHSKSQGGSSPLTRENSTFSINDATSHTSTMSSRHSASPVVFSSARSSPKEELHPTTSSQLAPSFSSSSSSSSGPRTFYPRQGATSKYLIGWKKPEGTINSVGFMDTRKRHQSDGNEIAHTRLRASTRDLRASPKPTSKSTIEEDLKKLIDLESPTPESQKNFKFHGLSSPQSPFPSTPTSRRALHRTLSDESIYSSQREHFFTSRASLLDQALPNDVFFSSTYPSLPKSLPLRRPSYTLGMKSLHGEFFASDSSLTDIQETRRQPIPDPGLMPLPDTASDLDWSNLVDAAKAYEVQRASFFAASDENHRPLSAASNSDQLEEQALVQMKSYSSSKDSSPTLASKVDQLEGMLKMLREDLKKEKEDKAHLQAEVEHLREDNLRLQEESQNASDKLKKFTEWVFNTIDMS.

Disordered stretches follow at residues 1-30 (MTSL…PKVH) and 47-125 (GSSV…VSLN). Residues 84 to 94 (PPRKENVKESS) show a composition bias toward basic and acidic residues. The span at 95–125 (RSSQEIETSSCLESLSSKGSPVSQGSSVSLN) shows a compositional bias: low complexity. Residues Ser162, Ser187, Ser193, Ser208, Ser255, and Ser288 each carry the phosphoserine modification. The segment at 277 to 297 (EREKPLKRRSKSETGDSSIFR) is disordered. A Rap-GAP domain is found at 638 to 855 (FMKLDEQGLN…RTRQEYLKDL (218 aa)). Residues 992–1068 (EMTLRRNGLG…VKVVIIPPHD (77 aa)) form the PDZ domain. A phosphoserine mark is found at Ser1117, Ser1126, Ser1155, Ser1166, Ser1188, Ser1209, and Ser1220. The disordered stretch occupies residues 1134-1165 (AGKGDGKMPLPERAANIPRSISSDGRPLERRL). A disordered region spans residues 1183–1252 (SQCRNSPSNL…WQRSEDSLAD (70 aa)). Positions 1188-1198 (SPSNLSSSSET) are enriched in low complexity. Positions 1225 to 1244 (DRQNTQSDIGGSGKSTPSWQ) are enriched in polar residues. Ser1273 and Ser1288 each carry phosphoserine. The interval 1286 to 1324 (HLSPNKQGHSDSHYSSHSSSNTLSSNASSAHSDEKWYDG) is disordered. Residues 1300 to 1315 (SSHSSSNTLSSNASSA) show a composition bias toward low complexity. Ser1344 is modified (phosphoserine; by PLK2). Thr1348 carries the phosphothreonine; by PLK2 modification. Positions 1358–1367 (TASLGASTSS) are enriched in low complexity. The disordered stretch occupies residues 1358 to 1382 (TASLGASTSSPRSGPGKEKVAPLWH). Ser1367 is subject to Phosphoserine; by CDK5. Ser1384 carries the phosphoserine modification. The span at 1395 to 1407 (LETEGHGMDRKTE) shows a compositional bias: basic and acidic residues. Positions 1395–1493 (LETEGHGMDR…SSSGPRTFYP (99 aa)) are disordered. Phosphoserine is present on residues Ser1408, Ser1409, Ser1430, Ser1449, and Ser1451. The segment covering 1417–1436 (KSQGGSSPLTRENSTFSIND) has biased composition (polar residues). 2 stretches are compositionally biased toward low complexity: residues 1437–1451 (ATSH…HSAS) and 1471–1486 (SSQL…SSSS). Phosphoserine occurs at positions 1546 and 1567. Residues 1567–1595 (SPTPESQKNFKFHGLSSPQSPFPSTPTSR) are disordered. Thr1569 carries the post-translational modification Phosphothreonine. A phosphoserine mark is found at Ser1572, Ser1583, Ser1586, Ser1603, and Ser1606. Arg1619 bears the Asymmetric dimethylarginine mark. Residues Ser1621, Ser1665, Ser1668, Ser1726, Ser1729, Ser1746, Ser1747, and Ser1752 each carry the phosphoserine modification. Positions 1753–1813 (PTLASKVDQL…ASDKLKKFTE (61 aa)) form a coiled coil.

As to quaternary structure, interacts (via PDZ domain) with EPHA4 (via PDZ motif); controls neuronal morphology through regulation of the RAP1 (RAP1A or RAP1B) and RAP2 (RAP2A, RAP2B or RAP2C) GTPases. Interacts with DLG4, PDLIM5, PDLIM7 and LZTS3. Interacts with the actin cytoskeleton. Post-translationally, ubiquitinated and degraded by the SCF(BTRC) following phosphorylation by PLK2. Phosphorylated at Ser-1367 by CDK5, creating a docking site for the POLO box domains of PLK2. Subsequently, PLK2 binds and phosphorylates SIPA1L1, leading to ubiquitination and degradation by the proteasome. Detected in brain (at protein level).

The protein localises to the cytoplasm. It is found in the cytoskeleton. The protein resides in the postsynaptic density. Its subcellular location is the synapse. It localises to the synaptosome. Its function is as follows. Stimulates the GTPase activity of RAP2A. Promotes reorganization of the actin cytoskeleton and recruits DLG4 to F-actin. Contributes to the regulation of dendritic spine morphogenesis. The protein is Signal-induced proliferation-associated 1-like protein 1 (Sipa1l1) of Rattus norvegicus (Rat).